We begin with the raw amino-acid sequence, 476 residues long: Aspartyl/glutamyl-tRNA(Asn/Gln) amidotransferase subunit B (476 aa).

This sequence belongs to the GatB/GatE family. GatB subfamily. In terms of assembly, heterotrimer of A, B and C subunits.

It catalyses the reaction L-glutamyl-tRNA(Gln) + L-glutamine + ATP + H2O = L-glutaminyl-tRNA(Gln) + L-glutamate + ADP + phosphate + H(+). The enzyme catalyses L-aspartyl-tRNA(Asn) + L-glutamine + ATP + H2O = L-asparaginyl-tRNA(Asn) + L-glutamate + ADP + phosphate + 2 H(+). Allows the formation of correctly charged Asn-tRNA(Asn) or Gln-tRNA(Gln) through the transamidation of misacylated Asp-tRNA(Asn) or Glu-tRNA(Gln) in organisms which lack either or both of asparaginyl-tRNA or glutaminyl-tRNA synthetases. The reaction takes place in the presence of glutamine and ATP through an activated phospho-Asp-tRNA(Asn) or phospho-Glu-tRNA(Gln). The sequence is that of Aspartyl/glutamyl-tRNA(Asn/Gln) amidotransferase subunit B from Bacillus pumilus (strain SAFR-032).